The primary structure comprises 252 residues: Thiamine thiazole synthase (252 aa).

Residues S35, 54–55 (EK), G62, V126, and 152–154 (HVD) contribute to the NAD(+) site. Fe cation-binding residues include D154 and H169. M217 serves as a coordination point for NAD(+). Residue R227 coordinates glycine.

This sequence belongs to the THI4 family. Homooctamer; tetramer of dimers. Fe(2+) is required as a cofactor.

The enzyme catalyses hydrogen sulfide + glycine + NAD(+) = ADP-5-ethyl-4-methylthiazole-2-carboxylate + nicotinamide + 3 H2O + H(+). The protein operates within cofactor biosynthesis; thiamine diphosphate biosynthesis. In terms of biological role, involved in the biosynthesis of the thiazole moiety of thiamine. Catalyzes the conversion of NAD and glycine to adenosine diphosphate 5-(2-hydroxyethyl)-4-methylthiazole-2-carboxylate (ADT), an adenylated thiazole intermediate, using free sulfide as a source of sulfur. This chain is Thiamine thiazole synthase, found in Pyrococcus abyssi (strain GE5 / Orsay).